Here is a 329-residue protein sequence, read N- to C-terminus: BTB/POZ domain-containing adapter for CUL3-mediated RhoA degradation protein 1 (329 aa).

Residues M1–Y31 form a disordered region. The BTB domain maps to K41–E109.

Belongs to the BACURD family. As to quaternary structure, homotetramer; forms a two-fold symmetric tetramer in solution. Interacts with CUL3; interaction is direct and forms a 5:5 heterodecamer. Component of the BCR(KCTD13) E3 ubiquitin ligase complex, at least composed of CUL3, KCTD13/BACURD1 and RBX1. Interacts with RHOA; with a preference for RhoA-GDP. Interacts with POLD2 and PCNA. Interacts with SPRTN.

It is found in the nucleus. It functions in the pathway protein modification; protein ubiquitination. In terms of biological role, substrate-specific adapter of a BCR (BTB-CUL3-RBX1) E3 ubiquitin-protein ligase complex required for synaptic transmission. The BCR(KCTD13) E3 ubiquitin ligase complex mediates the ubiquitination of RHOA, leading to its degradation by the proteasome, thereby regulating the actin cytoskeleton and promoting synaptic transmission. In Mus musculus (Mouse), this protein is BTB/POZ domain-containing adapter for CUL3-mediated RhoA degradation protein 1 (Kctd13).